Consider the following 502-residue polypeptide: UDP-N-acetylmuramoylalanine--D-glutamate ligase (502 aa).

136-142 (GTNGKTT) serves as a coordination point for ATP.

It belongs to the MurCDEF family.

The protein resides in the cytoplasm. It carries out the reaction UDP-N-acetyl-alpha-D-muramoyl-L-alanine + D-glutamate + ATP = UDP-N-acetyl-alpha-D-muramoyl-L-alanyl-D-glutamate + ADP + phosphate + H(+). It participates in cell wall biogenesis; peptidoglycan biosynthesis. Cell wall formation. Catalyzes the addition of glutamate to the nucleotide precursor UDP-N-acetylmuramoyl-L-alanine (UMA). This is UDP-N-acetylmuramoylalanine--D-glutamate ligase from Corynebacterium jeikeium (strain K411).